The chain runs to 304 residues: bZIP transcription factor 50 (304 aa).

At 1–222 (MDVEFFADLD…MQESAVLTET (222 aa)) the chain is on the cytoplasmic side. Disordered regions lie at residues 26–60 (GSGV…SREA) and 94–163 (GEEE…ERKK). The span at 45–59 (SPESVSSRRPSPSRE) shows a compositional bias: low complexity. The span at 127 to 139 (EKEDVEAEVDGDD) shows a compositional bias: acidic residues. Residues 141–203 (MSKKKRRQMR…NMALRQSLLK (63 aa)) form the bZIP domain. The segment at 143 to 167 (KKKRRQMRNRDSAMKSRERKKMYVK) is basic motif. A compositionally biased stretch (basic and acidic residues) spans 150 to 163 (RNRDSAMKSRERKK). The segment at 169-183 (LETKSKYLEAECRRL) is leucine-zipper. The chain crosses the membrane as a helical span at residues 223 to 243 (LPLVSLLWLVSIVCLLPVPGL). Over 244-304 (PNRNPVARSS…GPFRLAAAAC (61 aa)) the chain is Lumenal.

The protein belongs to the bZIP family.

The protein localises to the endoplasmic reticulum membrane. It is found in the nucleus. With respect to regulation, transcriptionally activated by IRE1 in response to endoplasmic reticulum (ER) stress. IRE1 cleaves a 20-bp fragment causing a frameshift of the mRNA transcript, leading to a nuclear isoform of the BZIP50 activator. In terms of biological role, transcription factor involved in endoplasmic reticulum (ER) stress response. Acts downstream of the ER stress sensors IRE1, BZIP39 and BZIP60 to activate BiP chaperone genes. This Oryza sativa subsp. japonica (Rice) protein is bZIP transcription factor 50.